The following is a 693-amino-acid chain: C6 finger domain transcription factor nscR (693 aa).

The segment at residues 17-43 is a DNA-binding region (zn(2)-C6 fungal-type); the sequence is CELCRERKVKCDKLDPCTNCSSAGVIC. The interval 589-608 is disordered; that stretch reads AANTLSVPHTPPSRSSITSS.

It localises to the nucleus. Transcription factor that specifically regulates the neosartoricin B biosynthesis gene cluster. This chain is C6 finger domain transcription factor nscR, found in Trichophyton rubrum (strain ATCC MYA-4607 / CBS 118892) (Athlete's foot fungus).